Reading from the N-terminus, the 833-residue chain is Leucine--tRNA ligase (833 aa).

Positions 41 to 52 (PYPSGAGLHVGH) match the 'HIGH' region motif. The 'KMSKS' region signature appears at 610–614 (KMSKS). Residue Lys-613 coordinates ATP.

This sequence belongs to the class-I aminoacyl-tRNA synthetase family.

Its subcellular location is the cytoplasm. The enzyme catalyses tRNA(Leu) + L-leucine + ATP = L-leucyl-tRNA(Leu) + AMP + diphosphate. The polypeptide is Leucine--tRNA ligase (Streptococcus pyogenes serotype M4 (strain MGAS10750)).